The primary structure comprises 154 residues: Transcriptional repressor NrdR (154 aa).

Residues 3–34 (CPFCGANDTKVIDSRLVAEGEQVRRRRECLAC) fold into a zinc finger. Positions 49-139 (PRLIKTDGSR…VYRRFQDLNE (91 aa)) constitute an ATP-cone domain.

Belongs to the NrdR family. It depends on Zn(2+) as a cofactor.

In terms of biological role, negatively regulates transcription of bacterial ribonucleotide reductase nrd genes and operons by binding to NrdR-boxes. The protein is Transcriptional repressor NrdR of Pseudomonas fluorescens (strain Pf0-1).